A 324-amino-acid chain; its full sequence is Beta-ketoacyl-[acyl-carrier-protein] synthase III (324 aa).

Active-site residues include cysteine 114 and histidine 246. The interval 247–251 (QANLR) is ACP-binding. The active site involves asparagine 276.

The protein belongs to the thiolase-like superfamily. FabH family. In terms of assembly, homodimer.

Its subcellular location is the cytoplasm. The enzyme catalyses malonyl-[ACP] + acetyl-CoA + H(+) = 3-oxobutanoyl-[ACP] + CO2 + CoA. The protein operates within lipid metabolism; fatty acid biosynthesis. In terms of biological role, catalyzes the condensation reaction of fatty acid synthesis by the addition to an acyl acceptor of two carbons from malonyl-ACP. Catalyzes the first condensation reaction which initiates fatty acid synthesis and may therefore play a role in governing the total rate of fatty acid production. Possesses both acetoacetyl-ACP synthase and acetyl transacylase activities. Its substrate specificity determines the biosynthesis of branched-chain and/or straight-chain of fatty acids. The protein is Beta-ketoacyl-[acyl-carrier-protein] synthase III of Campylobacter jejuni subsp. doylei (strain ATCC BAA-1458 / RM4099 / 269.97).